Here is a 277-residue protein sequence, read N- to C-terminus: Basic leucine zipper 9 (277 aa).

A disordered region spans residues 73–141 (ADSPVSANKP…ESAKRSRRRK (69 aa)). Ser100 bears the Phosphoserine mark. Positions 109-118 (AGQSEMTNDP) are enriched in polar residues. A bZIP domain is found at 120-183 (DLKRIRRMNS…RSAGTNNRVL (64 aa)). The segment at 122 to 141 (KRIRRMNSNRESAKRSRRRK) is basic motif. The Nuclear localization signal motif lies at 124–131 (IRRMNSNR). The leucine-zipper stretch occupies residues 148–162 (LETQVDSLKGDNSTL).

Belongs to the bZIP family. In terms of assembly, homodimer. Interacts with BZIP1, BZIP2, BZIP10, BZIP11, BZIP25, BZIP44, BZIP53 and BZIP63. Phosphorylated. Expressed in roots, shoots, stems, young leaves, and flowers, mostly in vascular tissues (e.g. phloem).

It localises to the nucleus. Functionally, transcription factor. The sequence is that of Basic leucine zipper 9 (BZIP9) from Arabidopsis thaliana (Mouse-ear cress).